The following is a 556-amino-acid chain: Acetyl-coenzyme A thioesterase (556 aa).

The 113-residue stretch at 6–118 (APGEVLMSQA…FSTFVVKPLG (113 aa)) folds into the HotDog ACOT-type 1 domain. Lys34 is modified (N6-succinyllysine). CoA is bound by residues 54 to 56 (TAS) and 83 to 85 (STS). Lys97 carries the N6-succinyllysine modification. Arg145 is a binding site for CoA. Lys160 and Lys229 each carry N6-succinyllysine. The region spanning 180 to 295 (MATSVQSIEL…FLIYNAVDDQ (116 aa)) is the HotDog ACOT-type 2 domain. Position 235–237 (235–237 (KFR)) interacts with CoA. Positions 341–550 (GTQWDISKKG…IKFIENATHD (210 aa)) constitute an START domain.

In terms of assembly, homodimer or homotetramer.

The protein localises to the cytoplasm. It localises to the cytosol. It carries out the reaction acetyl-CoA + H2O = acetate + CoA + H(+). The catalysed reaction is butanoyl-CoA + H2O = butanoate + CoA + H(+). The enzyme catalyses hexanoyl-CoA + H2O = hexanoate + CoA + H(+). The protein operates within lipid metabolism; fatty acid metabolism. Its activity is regulated as follows. Allosterically regulated by ATP (activator) and ADP (inhibitor). Cold labile, it dissociates into inactive monomers at low temperature. Functionally, catalyzes the hydrolysis of acyl-CoAs into free fatty acids and coenzyme A (CoASH), regulating their respective intracellular levels. Preferentially hydrolyzes acetyl-CoA. This is Acetyl-coenzyme A thioesterase (Acot12) from Rattus norvegicus (Rat).